We begin with the raw amino-acid sequence, 597 residues long: CTP synthase (597 aa).

Positions 1–272 (MARPKNVKYV…DMRVLKKLGL (272 aa)) are amidoligase domain. Ser18 contacts CTP. UTP is bound at residue Ser18. 19 to 24 (SLGKGI) serves as a coordination point for ATP. Tyr59 is an L-glutamine binding site. An ATP-binding site is contributed by Asp76. Mg(2+)-binding residues include Asp76 and Glu146. CTP contacts are provided by residues 153-155 (DIE), 193-198 (KTKPTQ), and Lys229. Residues 193-198 (KTKPTQ) and Lys229 each bind UTP. The 245-residue stretch at 299 to 543 (NVAICGKYTE…VGAAKAYADG (245 aa)) folds into the Glutamine amidotransferase type-1 domain. Residue Gly363 participates in L-glutamine binding. The Nucleophile; for glutamine hydrolysis role is filled by Cys390. L-glutamine contacts are provided by residues 391–394 (LGMQ), Glu414, and Arg471. Active-site residues include His516 and Glu518.

It belongs to the CTP synthase family. As to quaternary structure, homotetramer.

It carries out the reaction UTP + L-glutamine + ATP + H2O = CTP + L-glutamate + ADP + phosphate + 2 H(+). It catalyses the reaction L-glutamine + H2O = L-glutamate + NH4(+). The catalysed reaction is UTP + NH4(+) + ATP = CTP + ADP + phosphate + 2 H(+). Its pathway is pyrimidine metabolism; CTP biosynthesis via de novo pathway; CTP from UDP: step 2/2. With respect to regulation, allosterically activated by GTP, when glutamine is the substrate; GTP has no effect on the reaction when ammonia is the substrate. The allosteric effector GTP functions by stabilizing the protein conformation that binds the tetrahedral intermediate(s) formed during glutamine hydrolysis. Inhibited by the product CTP, via allosteric rather than competitive inhibition. In terms of biological role, catalyzes the ATP-dependent amination of UTP to CTP with either L-glutamine or ammonia as the source of nitrogen. Regulates intracellular CTP levels through interactions with the four ribonucleotide triphosphates. In Chlorobium luteolum (strain DSM 273 / BCRC 81028 / 2530) (Pelodictyon luteolum), this protein is CTP synthase.